Consider the following 273-residue polypeptide: Large ribosomal subunit protein uL2 (273 aa).

The disordered stretch occupies residues 221–262 (RGTAMNPVDHPHGGGEGRNFGKHPVTPWGVQTKGKKTRHNKR). The segment covering 253–262 (KGKKTRHNKR) has biased composition (basic residues).

Belongs to the universal ribosomal protein uL2 family. Part of the 50S ribosomal subunit. Forms a bridge to the 30S subunit in the 70S ribosome.

Functionally, one of the primary rRNA binding proteins. Required for association of the 30S and 50S subunits to form the 70S ribosome, for tRNA binding and peptide bond formation. It has been suggested to have peptidyltransferase activity; this is somewhat controversial. Makes several contacts with the 16S rRNA in the 70S ribosome. The polypeptide is Large ribosomal subunit protein uL2 (Haemophilus ducreyi (strain 35000HP / ATCC 700724)).